Consider the following 146-residue polypeptide: Ribosomal RNA large subunit methyltransferase H (146 aa).

Residues L62, G94, and L113 to L118 contribute to the S-adenosyl-L-methionine site.

It belongs to the RNA methyltransferase RlmH family. In terms of assembly, homodimer.

It localises to the cytoplasm. The enzyme catalyses pseudouridine(1915) in 23S rRNA + S-adenosyl-L-methionine = N(3)-methylpseudouridine(1915) in 23S rRNA + S-adenosyl-L-homocysteine + H(+). Specifically methylates the pseudouridine at position 1915 (m3Psi1915) in 23S rRNA. The protein is Ribosomal RNA large subunit methyltransferase H of Deinococcus radiodurans (strain ATCC 13939 / DSM 20539 / JCM 16871 / CCUG 27074 / LMG 4051 / NBRC 15346 / NCIMB 9279 / VKM B-1422 / R1).